The chain runs to 319 residues: uncharacterized protein (319 aa).

The 136-residue stretch at 29-164 folds into the MPN domain; sequence VNISSLALLK…LDAFRSVNPL (136 aa). Residues histidine 111, histidine 113, and aspartate 124 each contribute to the Zn(2+) site. Residues 111–124 carry the JAMM motif motif; it reads HSHPGFGCWLSSVD.

The protein belongs to the peptidase M67A family.

This is an uncharacterized protein from Caenorhabditis elegans.